The chain runs to 270 residues: Putative phosphoenolpyruvate synthase regulatory protein (270 aa).

ADP is bound at residue 150-157 (GVSRCGKT).

The protein belongs to the pyruvate, phosphate/water dikinase regulatory protein family. PSRP subfamily.

The enzyme catalyses [pyruvate, water dikinase] + ADP = [pyruvate, water dikinase]-phosphate + AMP + H(+). It carries out the reaction [pyruvate, water dikinase]-phosphate + phosphate + H(+) = [pyruvate, water dikinase] + diphosphate. Its function is as follows. Bifunctional serine/threonine kinase and phosphorylase involved in the regulation of the phosphoenolpyruvate synthase (PEPS) by catalyzing its phosphorylation/dephosphorylation. The polypeptide is Putative phosphoenolpyruvate synthase regulatory protein (Shewanella woodyi (strain ATCC 51908 / MS32)).